Reading from the N-terminus, the 211-residue chain is PITH domain-containing protein CG6153 (211 aa).

The 173-residue stretch at 20-192 (DHALEMGIEY…GVTICNYESR (173 aa)) folds into the PITH domain.

This sequence belongs to the PITHD1 family.

This Drosophila melanogaster (Fruit fly) protein is PITH domain-containing protein CG6153.